A 319-amino-acid chain; its full sequence is GPI-specific phospholipase A2-like PGAP3 (319 aa).

The N-terminal stretch at 1 to 23 (MAGRTARLVLLAGAAALASGSQG) is a signal peptide. Residues 24–101 (DREPVYRDCV…GKWPFSRFLC (78 aa)) are Lumenal-facing. Asparagine 40 carries an N-linked (GlcNAc...) asparagine glycan. Residues 102 to 122 (FQEPASAVASFLNGLASLVML) form a helical membrane-spanning segment. The Cytoplasmic portion of the chain corresponds to 123–135 (CRYRTSVPASSPM). A helical transmembrane segment spans residues 136-156 (YPTCVAFAWVSLNAWFWSTVF). Topologically, residues 157 to 169 (HTRDTDLTEKMDY) are lumenal. Residues 170 to 190 (FCASTVILHSIYLCCVRTVGL) traverse the membrane as a helical segment. At 191 to 200 (QHPAMASAFR) the chain is on the cytoplasmic side. The helical transmembrane segment at 201–221 (ALLLLLLTAHVSYLSLIHFDY) threads the bilayer. Residues 222–224 (GYN) are Lumenal-facing. The chain crosses the membrane as a helical span at residues 225-245 (MAANVAIGLLNAAWWLAWCLW). Over 246-257 (NQRLPHVHKCVA) the chain is Cytoplasmic. Residues 258–278 (VVLLLQGLSLLELLDFPPLFW) form a helical membrane-spanning segment. The Lumenal segment spans residues 279 to 281 (VLD). A helical transmembrane segment spans residues 282–302 (AHAIWHISTIPVHVLFFSFLE). The Cytoplasmic segment spans residues 303 to 319 (DDSLYLLKESEAKVKLD).

This sequence belongs to the PGAP3 family.

It localises to the golgi apparatus membrane. In terms of biological role, involved in the fatty acid remodeling steps of GPI-anchor maturation where the unsaturated acyl chain at sn-2 of inositol phosphate is replaced by a saturated stearoyl chain. May catalyze the first step of the fatty acid remodeling, by removing the unsaturated acyl chain at sn-2 of inositol phosphate, generating a lyso-GPI intermediate. The fatty acid remodeling steps is critical for the integration of GPI-APs into lipid rafts. The sequence is that of GPI-specific phospholipase A2-like PGAP3 from Bos taurus (Bovine).